The sequence spans 327 residues: MSAEILLILVIALLLDRVLGDPDWLWSRLTHPVVFFGKAVEYVDEALNRGEFTKAWLKFRGVVGILVLLAGATALGVVLARLFDVLGALGSLLEVVTVAVFLAQKSLADHVSRVAAGLRRDGLAGGREAVSMIVGRDPNTLDEPAVCRAAIESLAENFSDGVVAPAFWYAVAGLPGLLAYKMLNTADSMIGHKSPKYLHFGWASARLDDLANLPAARLSALLIAAGAYFRRGAEAAKTAIEVARRDHGLHRSPNSGWPEAAMAGATGVQLAGPRIYGGVKVDEPMMNDAGRAVAAIEDIEAAVTVFYAACSVMTFAFAAAALPLLLF.

Transmembrane regions (helical) follow at residues 63–83 (VGILVLLAGATALGVVLARLF), 84–104 (DVLGALGSLLEVVTVAVFLAQ), 158–178 (FSDGVVAPAFWYAVAGLPGLL), and 305–325 (VFYAACSVMTFAFAAAALPLL).

The protein belongs to the CobD/CbiB family.

Its subcellular location is the cell membrane. Its pathway is cofactor biosynthesis; adenosylcobalamin biosynthesis. Functionally, converts cobyric acid to cobinamide by the addition of aminopropanol on the F carboxylic group. This Rhizobium meliloti (strain 1021) (Ensifer meliloti) protein is Cobalamin biosynthesis protein CobD.